Reading from the N-terminus, the 202-residue chain is Holliday junction resolvase RecU (202 aa).

Residues T85, D87, E100, and Q119 each contribute to the Mg(2+) site.

Belongs to the RecU family. It depends on Mg(2+) as a cofactor.

The protein resides in the cytoplasm. It catalyses the reaction Endonucleolytic cleavage at a junction such as a reciprocal single-stranded crossover between two homologous DNA duplexes (Holliday junction).. Functionally, endonuclease that resolves Holliday junction intermediates in genetic recombination. Cleaves mobile four-strand junctions by introducing symmetrical nicks in paired strands. Promotes annealing of linear ssDNA with homologous dsDNA. Required for DNA repair, homologous recombination and chromosome segregation. The sequence is that of Holliday junction resolvase RecU from Streptococcus equi subsp. zooepidemicus (strain MGCS10565).